A 240-amino-acid chain; its full sequence is LexA repressor (240 aa).

Residues 26–46 (FDEMKEALDLASKSGIHRLIT) constitute a DNA-binding region (H-T-H motif). Active-site for autocatalytic cleavage activity residues include Ser-161 and Lys-199.

Belongs to the peptidase S24 family. Homodimer.

It catalyses the reaction Hydrolysis of Ala-|-Gly bond in repressor LexA.. Functionally, represses a number of genes involved in the response to DNA damage (SOS response), including recA and lexA. In the presence of single-stranded DNA, RecA interacts with LexA causing an autocatalytic cleavage which disrupts the DNA-binding part of LexA, leading to derepression of the SOS regulon and eventually DNA repair. The polypeptide is LexA repressor (Brucella ovis (strain ATCC 25840 / 63/290 / NCTC 10512)).